The sequence spans 305 residues: Ornithine carbamoyltransferase (305 aa).

Residues 48 to 51, Arg99, and 126 to 129 contribute to the carbamoyl phosphate site; these read STRT and HPCQ. Residues Asn157, Asp222, and 226–227 contribute to the L-ornithine site; that span reads SM. Residues 262-263 and Arg290 contribute to the carbamoyl phosphate site; that span reads CL.

It belongs to the aspartate/ornithine carbamoyltransferase superfamily. OTCase family.

It is found in the cytoplasm. The enzyme catalyses carbamoyl phosphate + L-ornithine = L-citrulline + phosphate + H(+). Its pathway is amino-acid biosynthesis; L-arginine biosynthesis; L-arginine from L-ornithine and carbamoyl phosphate: step 1/3. In terms of biological role, reversibly catalyzes the transfer of the carbamoyl group from carbamoyl phosphate (CP) to the N(epsilon) atom of ornithine (ORN) to produce L-citrulline. This is Ornithine carbamoyltransferase (argF) from Methanocaldococcus jannaschii (strain ATCC 43067 / DSM 2661 / JAL-1 / JCM 10045 / NBRC 100440) (Methanococcus jannaschii).